We begin with the raw amino-acid sequence, 244 residues long: Transmembrane protein 176A (244 aa).

The residue at position 42 (S42) is a Phosphoserine. A run of 4 helical transmembrane segments spans residues 60-80, 92-112, 122-142, and 204-224; these read VLVA…VLGG, SEGA…VAFL, ALMR…AIVI, and LLGI…VYIW.

This sequence belongs to the TMEM176 family. Interacts with MCOLN2. As to expression, specifically expressed in lung, kidney and spleen.

It localises to the membrane. This Mus musculus (Mouse) protein is Transmembrane protein 176A (Tmem176a).